Here is a 368-residue protein sequence, read N- to C-terminus: Peptide chain release factor 2 (368 aa).

Q251 carries the N5-methylglutamine modification.

It belongs to the prokaryotic/mitochondrial release factor family. Post-translationally, methylated by PrmC. Methylation increases the termination efficiency of RF2.

It localises to the cytoplasm. Its function is as follows. Peptide chain release factor 2 directs the termination of translation in response to the peptide chain termination codons UGA and UAA. The chain is Peptide chain release factor 2 from Nitratiruptor sp. (strain SB155-2).